Reading from the N-terminus, the 86-residue chain is Large ribosomal subunit protein bL31B (86 aa).

This sequence belongs to the bacterial ribosomal protein bL31 family. Type B subfamily. Part of the 50S ribosomal subunit.

The sequence is that of Large ribosomal subunit protein bL31B from Streptococcus agalactiae serotype III (strain NEM316).